The following is a 286-amino-acid chain: MLDLWYSESHADDTKFSIRVKEHLYSEKTPFQQIDFFKSETFGTFFTLDGYIMMTEKDEFIYHEMITHVPMAVNPKIKKVLIVGGGDGGTSREILRYNTIEKVDMVEIDERVVRLCQKYLTQTSCKLDNDSRLTMHFEDGKEFVKRAETGFYDLILVDSTDPIGPGEGLFTNEFYRDCERILSDDGILINQHESPYYKDYCHEMKRAHSKIKDKFPISMVYQFHMPTYASGHWLFGFASKKYHPLNNLNADSWNSLGLKTKYYNTNLHKGAFALPNYVIDELEKTE.

Positions aspartate 3–lysine 240 constitute a PABS domain. S-methyl-5'-thioadenosine is bound at residue glutamine 32. Residues histidine 63 and aspartate 87 each contribute to the spermidine site. S-methyl-5'-thioadenosine contacts are provided by residues glutamate 107 and aspartate 139–glycine 140. Catalysis depends on aspartate 158, which acts as the Proton acceptor. Aspartate 158–aspartate 161 is a binding site for spermidine. Proline 165 contacts S-methyl-5'-thioadenosine.

Belongs to the spermidine/spermine synthase family. As to quaternary structure, homodimer or homotetramer.

It localises to the cytoplasm. The catalysed reaction is S-adenosyl 3-(methylsulfanyl)propylamine + putrescine = S-methyl-5'-thioadenosine + spermidine + H(+). It functions in the pathway amine and polyamine biosynthesis; spermidine biosynthesis; spermidine from putrescine: step 1/1. Catalyzes the irreversible transfer of a propylamine group from the amino donor S-adenosylmethioninamine (decarboxy-AdoMet) to putrescine (1,4-diaminobutane) to yield spermidine. This chain is Polyamine aminopropyltransferase, found in Clostridium acetobutylicum (strain ATCC 824 / DSM 792 / JCM 1419 / IAM 19013 / LMG 5710 / NBRC 13948 / NRRL B-527 / VKM B-1787 / 2291 / W).